Reading from the N-terminus, the 590-residue chain is Aspartate--tRNA(Asp/Asn) ligase (590 aa).

Glutamate 172 serves as a coordination point for L-aspartate. The interval 196 to 199 (QLFK) is aspartate. Arginine 218 provides a ligand contact to L-aspartate. ATP is bound by residues 218–220 (RDE) and glutamine 227. Histidine 449 lines the L-aspartate pocket. Residue glutamate 484 participates in ATP binding. Arginine 491 lines the L-aspartate pocket. Residue 536–539 (GIDR) coordinates ATP.

It belongs to the class-II aminoacyl-tRNA synthetase family. Type 1 subfamily. Homodimer.

The protein localises to the cytoplasm. The enzyme catalyses tRNA(Asx) + L-aspartate + ATP = L-aspartyl-tRNA(Asx) + AMP + diphosphate. Its function is as follows. Aspartyl-tRNA synthetase with relaxed tRNA specificity since it is able to aspartylate not only its cognate tRNA(Asp) but also tRNA(Asn). Reaction proceeds in two steps: L-aspartate is first activated by ATP to form Asp-AMP and then transferred to the acceptor end of tRNA(Asp/Asn). The polypeptide is Aspartate--tRNA(Asp/Asn) ligase (Francisella tularensis subsp. tularensis (strain SCHU S4 / Schu 4)).